Reading from the N-terminus, the 246-residue chain is 1-(5-phosphoribosyl)-5-[(5-phosphoribosylamino)methylideneamino] imidazole-4-carboxamide isomerase (246 aa).

The active-site Proton acceptor is the aspartate 8. Aspartate 129 acts as the Proton donor in catalysis.

It belongs to the HisA/HisF family.

It is found in the cytoplasm. The enzyme catalyses 1-(5-phospho-beta-D-ribosyl)-5-[(5-phospho-beta-D-ribosylamino)methylideneamino]imidazole-4-carboxamide = 5-[(5-phospho-1-deoxy-D-ribulos-1-ylimino)methylamino]-1-(5-phospho-beta-D-ribosyl)imidazole-4-carboxamide. Its pathway is amino-acid biosynthesis; L-histidine biosynthesis; L-histidine from 5-phospho-alpha-D-ribose 1-diphosphate: step 4/9. The sequence is that of 1-(5-phosphoribosyl)-5-[(5-phosphoribosylamino)methylideneamino] imidazole-4-carboxamide isomerase from Methylocella silvestris (strain DSM 15510 / CIP 108128 / LMG 27833 / NCIMB 13906 / BL2).